We begin with the raw amino-acid sequence, 48 residues long: Phospholipase A2 superbin d (48 aa).

Positions 28, 30, and 32 each coordinate Ca(2+). An intrachain disulfide couples cysteine 29 to cysteine 45. Histidine 48 is a catalytic residue.

The cofactor is Ca(2+). As to expression, expressed by the venom gland.

The protein resides in the secreted. The enzyme catalyses a 1,2-diacyl-sn-glycero-3-phosphocholine + H2O = a 1-acyl-sn-glycero-3-phosphocholine + a fatty acid + H(+). In terms of biological role, snake venom phospholipase A2 (PLA2) that inhibits collagen-induced platelet aggregation. In terms of inhibition of platelet aggregation, superbin d is less potent as superbin a, b, and c. PLA2 catalyzes the calcium-dependent hydrolysis of the 2-acyl groups in 3-sn-phosphoglycerides. The protein is Phospholipase A2 superbin d of Austrelaps superbus (Lowland copperhead snake).